The sequence spans 349 residues: DNA-directed RNA polymerase subunit alpha (349 aa).

The segment at 1–226 is alpha N-terminal domain (alpha-NTD); the sequence is MLIAQRPTLV…GLFGLAQELN (226 aa). Residues 241–349 form an alpha C-terminal domain (alpha-CTD) region; that stretch reads AALAADLALP…GAEFVETEQY (109 aa). The disordered stretch occupies residues 308–349; sequence LKDSPPGFDPRQAVDTYGTDSYNPAFSDPSDDGAEFVETEQY. Over residues 336 to 349 the composition is skewed to acidic residues; sequence PSDDGAEFVETEQY.

It belongs to the RNA polymerase alpha chain family. In terms of assembly, homodimer. The RNAP catalytic core consists of 2 alpha, 1 beta, 1 beta' and 1 omega subunit. When a sigma factor is associated with the core the holoenzyme is formed, which can initiate transcription.

It catalyses the reaction RNA(n) + a ribonucleoside 5'-triphosphate = RNA(n+1) + diphosphate. In terms of biological role, DNA-dependent RNA polymerase catalyzes the transcription of DNA into RNA using the four ribonucleoside triphosphates as substrates. In Frankia alni (strain DSM 45986 / CECT 9034 / ACN14a), this protein is DNA-directed RNA polymerase subunit alpha.